The chain runs to 134 residues: MSRMYETIYIVQPDLGDEEIKALSTKVQDVVAGMNGDFKRLEDWGTRKLAYPINKNPRGRYFYLRFDGDSGLIAELERRLRLDDKVIRYQSVKLETEVVAPAAAPVKSAEEGTEEVAAEAATEAPAETTTTVEV.

A disordered region spans residues 103–134 (AAPVKSAEEGTEEVAAEAATEAPAETTTTVEV). The segment covering 118–134 (AEAATEAPAETTTTVEV) has biased composition (low complexity).

The protein belongs to the bacterial ribosomal protein bS6 family.

In terms of biological role, binds together with bS18 to 16S ribosomal RNA. This Geobacter sp. (strain M21) protein is Small ribosomal subunit protein bS6.